A 30-amino-acid polypeptide reads, in one-letter code: Thylakoid lumenal 17 kDa protein (30 aa).

Its subcellular location is the plastid. The protein localises to the chloroplast thylakoid lumen. This is Thylakoid lumenal 17 kDa protein from Spinacia oleracea (Spinach).